A 139-amino-acid polypeptide reads, in one-letter code: uncharacterized protein (139 aa).

This is an uncharacterized protein from Sinorhizobium fredii (strain NBRC 101917 / NGR234).